The following is a 127-amino-acid chain: Snaclec macrovipecetin subunit beta (127 aa).

3 cysteine pairs are disulfide-bonded: cysteine 4–cysteine 15, cysteine 32–cysteine 121, and cysteine 98–cysteine 113. Residues 11–122 form the C-type lectin domain; sequence YEGHCYKVFD…CSRTYKFVCK (112 aa).

As to quaternary structure, heterodimer of subunits alpha and beta; disulfide-linked. As to expression, expressed by the venom gland.

It is found in the secreted. Functionally, interferes with one step of hemostasis (modulation of platelet aggregation, or coagulation cascade, for example). This Macrovipera lebetinus (Levantine viper) protein is Snaclec macrovipecetin subunit beta.